The following is a 178-amino-acid chain: TM2 domain-containing protein biscotti (178 aa).

An N-terminal signal peptide occupies residues 1 to 18 (MFPVLLLLLFFFAKETHQ). Topologically, residues 19–99 (INVDCNELQM…YHLDTTLLLS (81 aa)) are extracellular. N-linked (GlcNAc...) asparagine glycosylation is found at N69 and N75. The region spanning 94–137 (TTLLLSVFLGMFGVDRFYLGYPGIGLLKFCTLGGMFLGQLIDIV) is the TM2 domain. A helical transmembrane segment spans residues 100–120 (VFLGMFGVDRFYLGYPGIGLL). Residues 121-124 (KFCT) are Cytoplasmic-facing. A helical transmembrane segment spans residues 125-145 (LGGMFLGQLIDIVLIALQVVG). Residues 146 to 178 (PADGSAYVIPYYGAGIHIVRSDNTTYRLPRDDW) lie on the Extracellular side of the membrane. N168 carries N-linked (GlcNAc...) asparagine glycosylation.

It belongs to the TM2 family.

The protein localises to the membrane. Its function is as follows. Positive regulator of Notch signaling. Maternal neurogenic factor involved in Notch signaling-dependent neuroectodermal specification during early embryogenesis. Functions cooperatively with amx/TM2D3 and amrt/TM2D2. The polypeptide is TM2 domain-containing protein biscotti (Drosophila melanogaster (Fruit fly)).